Reading from the N-terminus, the 372-residue chain is F-box/kelch-repeat protein At5g48990 (372 aa).

In terms of domain architecture, F-box spans 14 to 60 (SSPNPSLPEDLIVSILARVSRSYYTNLSVVSKTFRSILTSPELYKTR). Residues 176-222 (RTYFPGSSEKPDSLNCVEVYNTNTQTWNPVPPQKRKLKFGNMEGKIY) form a Kelch repeat.

The polypeptide is F-box/kelch-repeat protein At5g48990 (Arabidopsis thaliana (Mouse-ear cress)).